We begin with the raw amino-acid sequence, 103 residues long: UPF0145 protein BC_1816 (103 aa).

It belongs to the UPF0145 family.

The polypeptide is UPF0145 protein BC_1816 (Bacillus cereus (strain ATCC 14579 / DSM 31 / CCUG 7414 / JCM 2152 / NBRC 15305 / NCIMB 9373 / NCTC 2599 / NRRL B-3711)).